The primary structure comprises 180 residues: Molybdopterin synthase catalytic subunit (180 aa).

Residues 1–10 (MSSTTPTTEP) show a composition bias toward polar residues. A disordered region spans residues 1-31 (MSSTTPTTEPDQLPPHLDPQTYPRTTTNPTL). Positions 21–31 (TYPRTTTNPTL) are enriched in low complexity. Substrate is bound by residues 131–132 (HR), K147, and 154–156 (KKE).

It belongs to the MoaE family. MOCS2B subfamily. As to quaternary structure, heterotetramer; composed of 2 small (MOCS2A) and 2 large (MOCS2B) subunits.

It localises to the cytoplasm. It catalyses the reaction 2 [molybdopterin-synthase sulfur-carrier protein]-C-terminal-Gly-aminoethanethioate + cyclic pyranopterin phosphate + H2O = molybdopterin + 2 [molybdopterin-synthase sulfur-carrier protein]-C-terminal Gly-Gly + 2 H(+). Its pathway is cofactor biosynthesis; molybdopterin biosynthesis. Catalytic subunit of the molybdopterin synthase complex, a complex that catalyzes the conversion of precursor Z into molybdopterin. Acts by mediating the incorporation of 2 sulfur atoms from thiocarboxylated MOCS2A into precursor Z to generate a dithiolene group. This is Molybdopterin synthase catalytic subunit from Aspergillus niger (strain ATCC MYA-4892 / CBS 513.88 / FGSC A1513).